A 51-amino-acid polypeptide reads, in one-letter code: Large ribosomal subunit protein eL39 (51 aa).

This sequence belongs to the eukaryotic ribosomal protein eL39 family.

This is Large ribosomal subunit protein eL39 from Methanopyrus kandleri (strain AV19 / DSM 6324 / JCM 9639 / NBRC 100938).